A 512-amino-acid polypeptide reads, in one-letter code: Cytochrome P450 76C2 (512 aa).

A helical transmembrane segment spans residues 3-23; the sequence is IIFEQALFPLFCFVLSFFIIF. C451 is a binding site for heme.

Belongs to the cytochrome P450 family. Heme is required as a cofactor.

It localises to the membrane. The chain is Cytochrome P450 76C2 (CYP76C2) from Arabidopsis thaliana (Mouse-ear cress).